The chain runs to 29 residues: Protein Tat (29 aa).

The segment at 1–29 (PSSQPRGDPTGQEEPKKKVEKKTTTDPFD) is disordered. Positions 6–8 (RGD) match the Cell attachment site motif. Positions 13–29 (EEPKKKVEKKTTTDPFD) are enriched in basic and acidic residues.

It belongs to the lentiviruses Tat family. As to quaternary structure, interacts with host CCNT1. Associates with the P-TEFb complex composed at least of Tat, P-TEFb (CDK9 and CCNT1), TAR RNA, RNA Pol II. Recruits the HATs CREBBP, TAF1/TFIID, EP300, PCAF and GCN5L2. Interacts with host KAT5/Tip60; this interaction targets the latter to degradation. Interacts with the host deacetylase SIRT1. Interacts with host capping enzyme RNGTT; this interaction stimulates RNGTT. Binds to host KDR, and to the host integrins ITGAV/ITGB3 and ITGA5/ITGB1. Interacts with host KPNB1/importin beta-1 without previous binding to KPNA1/importin alpha-1. Interacts with EIF2AK2. Interacts with host nucleosome assembly protein NAP1L1; this interaction may be required for the transport of Tat within the nucleus, since the two proteins interact at the nuclear rim. Interacts with host C1QBP/SF2P32; this interaction involves lysine-acetylated Tat. Interacts with the host chemokine receptors CCR2, CCR3 and CXCR4. Interacts with host DPP4/CD26; this interaction may trigger an anti-proliferative effect. Interacts with host LDLR. Interacts with the host extracellular matrix metalloproteinase MMP1. Interacts with host PRMT6; this interaction mediates Tat's methylation. Interacts with, and is ubiquitinated by MDM2/Hdm2. Interacts with host PSMC3 and HTATIP2. Interacts with STAB1; this interaction may overcome SATB1-mediated repression of IL2 and IL2RA (interleukin) in T cells by binding to the same domain than HDAC1. Interacts (when acetylated) with human CDK13, thereby increasing HIV-1 mRNA splicing and promoting the production of the doubly spliced HIV-1 protein Nef. In terms of processing, acetylation by EP300, CREBBP, GCN5L2/GCN5 and PCAF regulates the transactivation activity of Tat. Post-translationally, phosphorylated by EIF2AK2 on serine and threonine residues adjacent to the basic region important for TAR RNA binding and function. Phosphorylation of Tat by EIF2AK2 is dependent on the prior activation of EIF2AK2 by dsRNA. Asymmetrical arginine methylation by host PRMT6 seems to diminish the transactivation capacity of Tat and affects the interaction with host CCNT1. In terms of processing, polyubiquitination by MDM2 does not target Tat to degradation, but activates its transactivation function and fosters interaction with CCNT1 and TAR RNA.

It localises to the host nucleus. Its subcellular location is the host nucleolus. The protein localises to the host cytoplasm. It is found in the secreted. Transcriptional activator that increases RNA Pol II processivity, thereby increasing the level of full-length viral transcripts. Recognizes a hairpin structure at the 5'-LTR of the nascent viral mRNAs referred to as the transactivation responsive RNA element (TAR) and recruits the cyclin T1-CDK9 complex (P-TEFb complex) that will in turn hyperphosphorylate the RNA polymerase II to allow efficient elongation. The CDK9 component of P-TEFb and other Tat-activated kinases hyperphosphorylate the C-terminus of RNA Pol II that becomes stabilized and much more processive. Other factors such as HTATSF1/Tat-SF1, SUPT5H/SPT5, and HTATIP2 are also important for Tat's function. Besides its effect on RNA Pol II processivity, Tat induces chromatin remodeling of proviral genes by recruiting the histone acetyltransferases (HATs) CREBBP, EP300 and PCAF to the chromatin. This also contributes to the increase in proviral transcription rate, especially when the provirus integrates in transcriptionally silent region of the host genome. To ensure maximal activation of the LTR, Tat mediates nuclear translocation of NF-kappa-B by interacting with host RELA. Through its interaction with host TBP, Tat may also modulate transcription initiation. Tat can reactivate a latently infected cell by penetrating in it and transactivating its LTR promoter. In the cytoplasm, Tat is thought to act as a translational activator of HIV-1 mRNAs. Its function is as follows. Extracellular circulating Tat can be endocytosed by surrounding uninfected cells via the binding to several surface receptors such as CD26, CXCR4, heparan sulfate proteoglycans (HSPG) or LDLR. Neurons are rarely infected, but they internalize Tat via their LDLR. Endosomal low pH allows Tat to cross the endosome membrane to enter the cytosol and eventually further translocate into the nucleus, thereby inducing severe cell dysfunctions ranging from cell activation to cell death. Through its interaction with nuclear HATs, Tat is potentially able to control the acetylation-dependent cellular gene expression. Tat seems to inhibit the HAT activity of KAT5/Tip60 and TAF1, and consequently modify the expression of specific cellular genes. Modulates the expression of many cellular genes involved in cell survival, proliferation or in coding for cytokines (such as IL10) or cytokine receptors. May be involved in the derepression of host interleukin IL2 expression. Mediates the activation of cyclin-dependent kinases and dysregulation of microtubule network. Tat plays a role in T-cell and neurons apoptosis. Tat induced neurotoxicity and apoptosis probably contribute to neuroAIDS. Host extracellular matrix metalloproteinase MMP1 cleaves Tat and decreases Tat's mediated neurotoxicity. Circulating Tat also acts as a chemokine-like and/or growth factor-like molecule that binds to specific receptors on the surface of the cells, affecting many cellular pathways. In the vascular system, Tat binds to ITGAV/ITGB3 and ITGA5/ITGB1 integrins dimers at the surface of endothelial cells and competes with bFGF for heparin-binding sites, leading to an excess of soluble bFGF. Binds to KDR/VEGFR-2. All these Tat-mediated effects enhance angiogenesis in Kaposi's sarcoma lesions. This Homo sapiens (Human) protein is Protein Tat.